The sequence spans 763 residues: Elongation factor G, mitochondrial (763 aa).

A mitochondrion-targeting transit peptide spans Met1 to Ala52. Residues Ser60–Ser347 form the tr-type G domain. GTP contacts are provided by residues Ala69–Thr76, Asp145–His149, and Asn199–Asp202.

The protein belongs to the TRAFAC class translation factor GTPase superfamily. Classic translation factor GTPase family. EF-G/EF-2 subfamily.

The protein localises to the mitochondrion. Its pathway is protein biosynthesis; polypeptide chain elongation. Functionally, mitochondrial GTPase that catalyzes the GTP-dependent ribosomal translocation step during translation elongation. During this step, the ribosome changes from the pre-translocational (PRE) to the post-translocational (POST) state as the newly formed A-site-bound peptidyl-tRNA and P-site-bound deacylated tRNA move to the P and E sites, respectively. Catalyzes the coordinated movement of the two tRNA molecules, the mRNA and conformational changes in the ribosome. This is Elongation factor G, mitochondrial (mef1) from Schizosaccharomyces japonicus (strain yFS275 / FY16936) (Fission yeast).